Consider the following 414-residue polypeptide: 3-oxo-isoapionate-4-phosphate transcarboxylase/hydrolase (414 aa).

Positions 180, 182, and 183 each coordinate Mg(2+). Lys180 is subject to N6-carboxylysine.

This sequence belongs to the RuBisCO large chain family. The cofactor is Mg(2+).

The catalysed reaction is 3-oxoisoapionate 4-phosphate + H2O = (2R)-3-phosphoglycerate + glycolate + H(+). Its pathway is carbohydrate metabolism. Its function is as follows. Involved in catabolism of D-apiose. Catalyzes the conversion of 3-oxo-isoapionate 4-phosphate to 3-phosphoglycerate and glycolate. The chain is 3-oxo-isoapionate-4-phosphate transcarboxylase/hydrolase from Xanthobacter autotrophicus (strain ATCC BAA-1158 / Py2).